Reading from the N-terminus, the 302-residue chain is Large ribosomal subunit protein uL3c (302 aa).

The N-terminal 36 residues, 1 to 36, are a transit peptide targeting the chloroplast; it reads MFQSSRLVALGLCAALVLVGGSIILSGLSPNLSSPM. The disordered stretch occupies residues 208 to 239; that stretch reads FQGSIRRWGMKRGPMSHGSKSHRQHGSIGCSA.

Belongs to the universal ribosomal protein uL3 family. In terms of assembly, part of the 50S ribosomal subunit.

The protein localises to the plastid. It localises to the chloroplast. In terms of biological role, one of the primary rRNA binding proteins, it binds directly near the 3'-end of the 23S rRNA, where it nucleates assembly of the 50S subunit. This chain is Large ribosomal subunit protein uL3c (RPL3), found in Bigelowiella natans (Pedinomonas minutissima).